A 589-amino-acid polypeptide reads, in one-letter code: ATP-dependent lipid A-core flippase (589 aa).

5 helical membrane passes run 23–43, 60–80, 153–173, 249–269, and 272–292; these read WPIFLIGVVGMIAVSLSDAGF, LVFIRWLPFIIVLVFLFRGAA, VGLLVVMFLVSWKLTLFFLVI, VGTSLVQLLIAIPIAIVLFFA, and PSFHVTAGSFASIVSAMIMML. Positions 27-307 constitute an ABC transmembrane type-1 domain; sequence LIGVVGMIAV…LTMVNSYIQK (281 aa). In terms of domain architecture, ABC transporter spans 339–575; that stretch reads IEYQGVSFAY…NGAYAELYRM (237 aa). Residue 373 to 380 coordinates ATP; it reads GRSGAGKS.

Belongs to the ABC transporter superfamily. Lipid exporter (TC 3.A.1.106) family. As to quaternary structure, homodimer.

The protein localises to the cell inner membrane. The catalysed reaction is ATP + H2O + lipid A-core oligosaccharideSide 1 = ADP + phosphate + lipid A-core oligosaccharideSide 2.. Functionally, involved in lipopolysaccharide (LPS) biosynthesis. Translocates lipid A-core from the inner to the outer leaflet of the inner membrane. Transmembrane domains (TMD) form a pore in the inner membrane and the ATP-binding domain (NBD) is responsible for energy generation. The polypeptide is ATP-dependent lipid A-core flippase (Coxiella burnetii (strain RSA 493 / Nine Mile phase I)).